Consider the following 132-residue polypeptide: DNA-binding protein inhibitor ID-2 (132 aa).

A bHLH domain is found at 23–75 (ARSKTPVDDPMSLLYNMNDCYSKLKELVPSIPQNKKVSKMEILQHVIDYILDL). Residues 105–114 (LNTDISILSL) carry the Nuclear export signal motif.

Heterodimer with other HLH proteins.

It localises to the cytoplasm. The protein resides in the nucleus. Functionally, transcriptional regulator (lacking a basic DNA binding domain) which negatively regulates the basic helix-loop-helix (bHLH) transcription factors by forming heterodimers and inhibiting their DNA binding and transcriptional activity. Inhibits the activity of both neurogenic (neurod1/neuroD) and myogenic (myod1/myoD) bHLH factors. May play a role in the regulation of the circadian clock. The polypeptide is DNA-binding protein inhibitor ID-2 (Xenopus tropicalis (Western clawed frog)).